Here is a 228-residue protein sequence, read N- to C-terminus: Phosphoglycolate phosphatase (228 aa).

The Nucleophile role is filled by Asp-12. The Mg(2+) site is built by Asp-12, Asp-14, and Asp-177.

Belongs to the HAD-like hydrolase superfamily. CbbY/CbbZ/Gph/YieH family. Mg(2+) is required as a cofactor.

The catalysed reaction is 2-phosphoglycolate + H2O = glycolate + phosphate. The protein operates within organic acid metabolism; glycolate biosynthesis; glycolate from 2-phosphoglycolate: step 1/1. Specifically catalyzes the dephosphorylation of 2-phosphoglycolate. Is involved in the dissimilation of the intracellular 2-phosphoglycolate formed during the DNA repair of 3'-phosphoglycolate ends, a major class of DNA lesions induced by oxidative stress. This chain is Phosphoglycolate phosphatase, found in Vibrio vulnificus (strain CMCP6).